The chain runs to 361 residues: Septin-12 (361 aa).

In terms of domain architecture, Septin-type G spans 45–316 (MGFEFNIMVV…ENYRIIRLKE (272 aa)). The interval 45 to 318 (MGFEFNIMVV…YRIIRLKESH (274 aa)) is interaction with SEPTIN7. Residues 55 to 62 (GQSGLGKS) are G1 motif. GTP-binding positions include 55 to 62 (GQSGLGKS), Thr-88, Gly-114, 194 to 202 (RADSLTIEE), Gly-250, and Arg-265. Residues 111-114 (DTPG) are G3 motif. The G4 motif stretch occupies residues 193-196 (ARAD). Residues 257 to 361 (VNGRCVLGRK…WAEDNSDEDF (105 aa)) form a self-association (via N-terminus) to polymerize octameric septin 12-7-6-2/4-2/4-6-7-12 filaments region. Positions 333–361 (PPPAPTGTRASPGPAKMCRWAEDNSDEDF) are disordered. A compositionally biased stretch (low complexity) spans 338-347 (TGTRASPGPA).

Belongs to the TRAFAC class TrmE-Era-EngA-EngB-Septin-like GTPase superfamily. Septin GTPase family. Septins polymerize into heterooligomeric protein complexes that form filaments, and can associate with cellular membranes, actin filaments and microtubules. GTPase activity is required for filament formation. Interacts with SEPTIN6 and SEPTIN11. Component of a octameric complex consisting of SEPTIN12, SEPTIN7, SEPTIN6 and SEPTIN2 or SEPTIN4 in the order 12-7-6-2-2-6-7-12 or 12-7-6-4-4-6-7-12 and located in the sperm annulus; the octamer polymerizes into filaments via the SEPTIN12 N- and C-termini; the SEPTIN12:SEPTIN7 association is mediated by the GTP-binding domains. Interacts with SPAG4 and LMNB1. Associates with alpha- and beta-tubulins.

It localises to the cytoplasm. The protein localises to the cytoskeleton. Its subcellular location is the spindle. It is found in the cell projection. The protein resides in the cilium. It localises to the flagellum. Filament-forming cytoskeletal GTPase. May play a role in cytokinesis (Potential). Involved in spermatogenesis. Involved in the morphogenesis of sperm heads and the elongation of sperm tails probably implicating the association with alpha- and beta-tubulins. Forms a filamentous structure with SEPTIN7, SEPTIN6, SEPTIN2 and probably SEPTIN4 at the sperm annulus which is required for the structural integrity and motility of the sperm tail during postmeiotic differentiation. This chain is Septin-12, found in Bos taurus (Bovine).